Consider the following 391-residue polypeptide: NADH-quinone oxidoreductase subunit D (391 aa).

It belongs to the complex I 49 kDa subunit family. NDH-1 is composed of 14 different subunits. Subunits NuoB, C, D, E, F, and G constitute the peripheral sector of the complex.

It localises to the cell inner membrane. The enzyme catalyses a quinone + NADH + 5 H(+)(in) = a quinol + NAD(+) + 4 H(+)(out). Its function is as follows. NDH-1 shuttles electrons from NADH, via FMN and iron-sulfur (Fe-S) centers, to quinones in the respiratory chain. The immediate electron acceptor for the enzyme in this species is believed to be ubiquinone. Couples the redox reaction to proton translocation (for every two electrons transferred, four hydrogen ions are translocated across the cytoplasmic membrane), and thus conserves the redox energy in a proton gradient. In Rickettsia bellii (strain OSU 85-389), this protein is NADH-quinone oxidoreductase subunit D.